We begin with the raw amino-acid sequence, 79 residues long: Putative sulfur carrier protein TM_0983 (79 aa).

The active-site Cysteine persulfide intermediate is the Cys-17.

It belongs to the sulfur carrier protein TusA family.

This Thermotoga maritima (strain ATCC 43589 / DSM 3109 / JCM 10099 / NBRC 100826 / MSB8) protein is Putative sulfur carrier protein TM_0983.